Consider the following 779-residue polypeptide: FAD-dependent monooxygenase BOA8 (779 aa).

FAD contacts are provided by E85, R128, D331, and A344. The next 7 helical transmembrane spans lie at 471–491 (AQLA…KTPE), 504–524 (VKLD…IWTI), 542–562 (AFLL…YFFF), 587–607 (ILPL…WSSI), 618–638 (NAWY…KFIV), 665–685 (ILIC…SIAF), and 742–762 (LILT…GLIV).

Belongs to the paxM FAD-dependent monooxygenase family. It depends on FAD as a cofactor.

It is found in the membrane. It functions in the pathway polyketide biosynthesis. Functionally, FAD-dependent monooxygenase; part of the gene cluster B that mediates the biosynthesis of botcinic acid and its botcinin derivatives, acetate-derived polyketides that contribute to virulence when combined with the sesquiterpene botrydial. Botcinic acid and its derivatives have been shown to induce chlorosis and necrosis during host plant infection, but also have antifungal activities. Two polyketide synthases, BOA6 and BOA9, are involved in the biosynthesis of botcinins. BOA6 mediates the formation of the per-methylated tetraketide core by condensation of four units of malonyl-CoA with one unit of acetyl-CoA, which would be methylated in activated methylene groups to yield a bicyclic acid intermediate that could then either be converted to botrylactone derivatives or lose the starter acetate unit through a retro-Claisen type C-C bond cleavage to yield botcinin derivatives. The second polyketide synthase, BOA9, is probably required for the biosynthesis of the tetraketide side chain of botcinins. The methyltransferase (MT) domain within BOA6 is probably responsible for the incorporation of four methyl groups. The trans-enoyl reductase BOA5 might take over the enoyl reductase function of BOA6 that misses an ER domain. The monooxygenases BOA2, BOA3 and BOA4 might be involved in further hydroxylations at C4, C5 and C8, whereas BOA7, close to BOA9, could potentially be involved in the hydroxylation at C4 in the side chain of botcinins. The chain is FAD-dependent monooxygenase BOA8 from Botryotinia fuckeliana (strain B05.10) (Noble rot fungus).